The sequence spans 2399 residues: MNTEELELLSDSKYRNYVAAIDKALKNFEYSSEWADLISALGKLNKVLQNNAKYQVVPKKLTIGKRLAQCLHPALPGGVHRKALETYEIIFKIIGPKRLAKDLFLYSSGLFPLLANAAMSVKPALLGLYEMYYLPLGKTLKPGLQGLLTGILPGLEEGSEYYERTNTLLEKVAAAVEQSAFYSALWGSLLTSPAVRLPGITYVLAHLNRKLSMEDQLYIIGSDIELMVEAVSTSVQDSSVLVQRSTLDLILFCFPFHMSQATRPDMIRILSAALHVVLRRDMSLNRRLYAWLLGFDNNGAIIGPRSTRHSNPEEHATYYFTTFSKELLVQAMVGILQVNGFGEESTLMQDLKPFRILISLLDKPELGPVILEDVLIEVFRTLYSQCKAELDLQMEPPFSKDHAQLSSKLRENKKTAELIKTANLLFNSFEPYYMWDYIARWFEECCRQSFFLSRRTLHARLQVGPGDSSDSSELQLTNFCLLVDFLLDIVSLETYIEIQTEHLPQLLLRMISALTSHLQTLRLSELTDSLRLCSKILSKVQPPLLSAGNGGVVQFPSGQNSTVKEWEDKKQVSSVSMENPAEVFEDGENPPSSRSSESGFTEFIQYQADRPDDLDRELNGQGAATIPIGSTSSETETASTVGSEETVIQPPSTFTQGAAGRSGKAVQKTAMQCCLEYVQQFLSRLINLYIIHSDSFPQALAADHQGDFSRIQRETSKWDRDSQGDAKERNIHTPKTSKEYLSAFLAACQLFLECSSFPVYIAEGNHTSESHSEKPDTDCEHAHPPQWLRTLMSACSQARDFRVQSAAVSLVMDLVGLTQSVAMVTGENINSMEPAQPLSPNQGRVAVVIRPPLTQGNLKYIAEKTEFFKHVALTLWDQLGDGTPQHHQKSVELFYQLHNLVPSSSICEDVVSQQLTHKDKKIRMEAHAKFAVLWHLTRDLHINKSSFARSFDRSLFIMLDSLTSLDGSTSSVGQAWLNQVLQRHDIARVLEPLLLLLLHPKTQRVSVQRVQAERYWSKTSCYPGEENDKHFMQNFTCNNVSQVHLIASKGNGEKPLTMDEMENFSLTVNPLSDRLSLLSTSSETIPMVVSDFDLPDQQMEILQSSDSGCSQSSAGDNFSYEVDPENANAHEDSHMAKASSPDDDVQQVVFDLICKVVSGLEAESESVTSELEIESLQTKSSDLDPGKEATKIEDQAPQHSQHVLLSDDSPRFLSVSTEEGCECLANGISRNSSSPCISGTAQTLNDSSVPSETKSRQRSHSSIQFSFKEKLSEKVSEKETIVKESGKQPGAKPKVKLARKKDEDKKKAASEKLKQANVFFSEGLDLENWYSCGEGEISEIESDMGSPGSRKSPNFNIHPLYQHVLLYLQLYDSSRTLYAFSAIKSILKTNPIAFVNAISTTSVNNAYTPQLSLLQNLLARHRISVMGKDFYSHIPVDSNHNFRSSMYIEILISLCLYYMRSHYPTHVKVTTQDLIGNRNMQMMSIEILTLLFTELAKVIESSAKGFPSFISDMLSKCKVQKVILHCLLSSIFSVQKWHSEKTAGKSMVAVEEGFSEDSLINFSEDELDNGSTLQSQLLRVLQRLIVLEHHVMTIPEENEAGFDFVVSDLEHISPHQPMTSLQYLHAQPITCQGMFLCAVIRALHQHCACKMHPQWIGLITSTLPYMGKVLQRVVVSVTLQLCRNLDNLIQQYKYETGLSDSRPLWVASIIPPDMILTLLEGITAIIHYCLLDPTTQYHQLLVNVDQKHLVEARSGILSILHMIMSSVTLLWSILHQADASEKMAVAASASVTTINLGATKVIPAASEEQLLLVELVRSISVMRAETVIQTVKEVLKQPPAIAKDKVRKLCFCRKFSFRTGADRIPVPNIVDSWTSLLVLLKDSIQLSLPAPGQFLILGVLNEFIMKNPSLENKKDQRDLQDVTHKIVDAIGAIAGSSLEQTTWLRRNLEVKPSPKIMVDGTNLESDVEDMLSPAMETSNITPSVYSVHALTLLSEVLAHLLDMVFYSDEKERVIPLLVNIMHYVVPYLRNHSAHNAPSYRACVQLLSSLSGYQYTRRAWKKEAFDLFMDPSFFQMDASCVSHWRAIMDNLMTHDKTTFRDLMTRVAVAQSSSLNLFANRDVELEQRAMLLKRLAFAVLSSESDQYQKYLPDIQERLVESLRLPQVQVFLLMEQELTADEDISRTSGPSAAGLETTYTGGNGFSTSYNSQRWLNLYLSACKFLDLALALPSENLPQFQMYRWAFIPEASDDSGLEVRRQGIHQREFKPYVVRLAKLLRKRAKDEEDFKILEGLEMAKHQKNPEEDCSGRTLGWEPGHLLLTLCTMRNMEQLLPFFNVLSQVFNSKVTSRCGGHSGSPVLYPNSFPNKDMKLENHKAFSSKARQKIEEMIEKDFLEGVIKT.

Disordered regions lie at residues 556–598, 619–660, 1105–1124, 1166–1188, 1234–1263, and 1279–1308; these read PSGQ…SSES, NGQG…GAAG, SDSG…EVDP, SVTS…PGKE, SPCI…HSSI, and ETIV…KKKA. Low complexity-rich tracts occupy residues 629–647 and 1105–1116; these read GSTS…EETV and SDSGCSQSSAGD. Polar residues-rich tracts occupy residues 1166–1180 and 1234–1252; these read SVTS…QTKS and SPCI…VPSE. Serine 1261 is subject to Phosphoserine.

It belongs to the DOP1 family.

The protein localises to the golgi apparatus membrane. Its function is as follows. May be involved in protein traffic between late Golgi and early endosomes. The polypeptide is Protein DOP1A (Dop1a) (Mus musculus (Mouse)).